The following is a 145-amino-acid chain: 3-dehydroquinate dehydratase (145 aa).

Tyr-23 acts as the Proton acceptor in catalysis. Asn-74, His-80, and Asp-87 together coordinate substrate. Catalysis depends on His-100, which acts as the Proton donor. Substrate-binding positions include 101–102 and Arg-111; that span reads IS.

This sequence belongs to the type-II 3-dehydroquinase family. As to quaternary structure, homododecamer.

It catalyses the reaction 3-dehydroquinate = 3-dehydroshikimate + H2O. It functions in the pathway metabolic intermediate biosynthesis; chorismate biosynthesis; chorismate from D-erythrose 4-phosphate and phosphoenolpyruvate: step 3/7. In terms of biological role, catalyzes a trans-dehydration via an enolate intermediate. In Dictyoglomus turgidum (strain DSM 6724 / Z-1310), this protein is 3-dehydroquinate dehydratase.